A 394-amino-acid polypeptide reads, in one-letter code: NAD(P)H-quinone oxidoreductase subunit H (394 aa).

The protein belongs to the complex I 49 kDa subunit family. NDH-1 can be composed of about 15 different subunits; different subcomplexes with different compositions have been identified which probably have different functions.

The protein resides in the cellular thylakoid membrane. The catalysed reaction is a plastoquinone + NADH + (n+1) H(+)(in) = a plastoquinol + NAD(+) + n H(+)(out). It carries out the reaction a plastoquinone + NADPH + (n+1) H(+)(in) = a plastoquinol + NADP(+) + n H(+)(out). Its function is as follows. NDH-1 shuttles electrons from an unknown electron donor, via FMN and iron-sulfur (Fe-S) centers, to quinones in the respiratory and/or the photosynthetic chain. The immediate electron acceptor for the enzyme in this species is believed to be plastoquinone. Couples the redox reaction to proton translocation, and thus conserves the redox energy in a proton gradient. Cyanobacterial NDH-1 also plays a role in inorganic carbon-concentration. The polypeptide is NAD(P)H-quinone oxidoreductase subunit H (Picosynechococcus sp. (strain ATCC 27264 / PCC 7002 / PR-6) (Agmenellum quadruplicatum)).